We begin with the raw amino-acid sequence, 424 residues long: NADH-quinone oxidoreductase subunit H (424 aa).

9 helical membrane passes run 11-31 (LVVA…LVAI), 79-99 (FVYF…FAFI), 119-139 (LPVA…GIVL), 160-180 (VISY…YAGS), 193-213 (VWYI…MVGE), 255-275 (VSAL…PLNL), 283-303 (WWPV…YFWL), 317-337 (ALGW…AAVI), and 347-367 (YWTP…VMSL). Residues 376–424 (AVTKARRRGKQPAAGPDEQGALEPLFPTPPLPMKPLAQPVGASKENARG) form a disordered region.

The protein belongs to the complex I subunit 1 family. In terms of assembly, NDH-1 is composed of 14 different subunits. Subunits NuoA, H, J, K, L, M, N constitute the membrane sector of the complex.

Its subcellular location is the cell membrane. It carries out the reaction a quinone + NADH + 5 H(+)(in) = a quinol + NAD(+) + 4 H(+)(out). Its function is as follows. NDH-1 shuttles electrons from NADH, via FMN and iron-sulfur (Fe-S) centers, to quinones in the respiratory chain. The immediate electron acceptor for the enzyme in this species is believed to be menaquinone. Couples the redox reaction to proton translocation (for every two electrons transferred, four hydrogen ions are translocated across the cytoplasmic membrane), and thus conserves the redox energy in a proton gradient. This subunit may bind ubiquinone. The chain is NADH-quinone oxidoreductase subunit H from Mycobacterium ulcerans (strain Agy99).